Here is a 144-residue protein sequence, read N- to C-terminus: Putative pre-16S rRNA nuclease (144 aa).

This sequence belongs to the YqgF nuclease family.

The protein localises to the cytoplasm. Could be a nuclease involved in processing of the 5'-end of pre-16S rRNA. The chain is Putative pre-16S rRNA nuclease from Picosynechococcus sp. (strain ATCC 27264 / PCC 7002 / PR-6) (Agmenellum quadruplicatum).